The primary structure comprises 108 residues: Urease subunit beta (108 aa).

The protein belongs to the urease beta subunit family. As to quaternary structure, probable heterotrimer of UreA (gamma), UreB (beta) and UreC (alpha) subunits. Three heterotrimers associate to form the active enzyme. The trimeric urease interacts with an accessory complex composed of UreD, UreF and UreG, which is required for the assembly of the nickel containing metallocenter of UreC. The UreE protein may also play a direct role in nickel transfer to the urease apoprotein.

It is found in the cytoplasm. The enzyme catalyses urea + 2 H2O + H(+) = hydrogencarbonate + 2 NH4(+). The protein operates within nitrogen metabolism; urea degradation; CO(2) and NH(3) from urea (urease route): step 1/1. The chain is Urease subunit beta from Proteus mirabilis (strain HI4320).